The sequence spans 243 residues: Triosephosphate isomerase (243 aa).

Residue 9–11 (NWK) participates in substrate binding. Histidine 96 functions as the Electrophile in the catalytic mechanism. Glutamate 165 functions as the Proton acceptor in the catalytic mechanism. Substrate contacts are provided by residues glycine 171, serine 204, and 225 to 226 (GG).

The protein belongs to the triosephosphate isomerase family. As to quaternary structure, homodimer.

The protein localises to the cytoplasm. The enzyme catalyses D-glyceraldehyde 3-phosphate = dihydroxyacetone phosphate. It participates in carbohydrate biosynthesis; gluconeogenesis. Its pathway is carbohydrate degradation; glycolysis; D-glyceraldehyde 3-phosphate from glycerone phosphate: step 1/1. Its function is as follows. Involved in the gluconeogenesis. Catalyzes stereospecifically the conversion of dihydroxyacetone phosphate (DHAP) to D-glyceraldehyde-3-phosphate (G3P). This is Triosephosphate isomerase from Parasynechococcus marenigrum (strain WH8102).